An 82-amino-acid polypeptide reads, in one-letter code: Protein MGF 110-5L (82 aa).

A signal peptide spans 1–28 (MLVIFLGILGLLANQVSSQLVGQLHPTE). Asparagine 62 carries an N-linked (GlcNAc...) asparagine; by host glycan.

Belongs to the asfivirus MGF 110 family.

Functionally, plays a role in virus cell tropism, and may be required for efficient virus replication in macrophages. The protein is Protein MGF 110-5L of Ornithodoros (relapsing fever ticks).